Reading from the N-terminus, the 483-residue chain is NAD-dependent protein deacetylase SRT1 (483 aa).

Residues 27-270 (PELLHKKIEE…MYMMNLRIPP (244 aa)) form the Deacetylase sirtuin-type domain. NAD(+) contacts are provided by residues 53–57 (AGIST), 63–65 (DFR), and 114–117 (QNVD). Catalysis depends on His134, which acts as the Proton acceptor. Positions 142, 145, 167, and 172 each coordinate Zn(2+). NAD(+) contacts are provided by residues 209 to 211 (GTS) and 235 to 237 (NLQ).

It belongs to the sirtuin family. Class IV subfamily. Zn(2+) is required as a cofactor.

The protein localises to the nucleus. The catalysed reaction is N(6)-acetyl-L-lysyl-[protein] + NAD(+) + H2O = 2''-O-acetyl-ADP-D-ribose + nicotinamide + L-lysyl-[protein]. NAD-dependent protein deacetylase. Has deacetylase activity towards H3K9Ac. May have a function in the safeguard against genome instability and DNA damage to ensure plant cell growth. May negatively regulate metabolic signal transduction involving methanol and jasmonates during leaf senescence. Required for histone H3K9Ac deacetylation and repression of AP2-1/RSR1 and amylase genes during early seed development. Functions as an epigenetic regulator to repress the expression of glycolytic genes and glycolysis in seedlings. Reduces lysine acetylation of the glycolytic glyceraldehyde-3-phosphate dehydrogenase (GAPDH), which is found to also function as an activator of glycolytic gene expression. This chain is NAD-dependent protein deacetylase SRT1, found in Oryza sativa subsp. indica (Rice).